We begin with the raw amino-acid sequence, 84 residues long: Serine protease inhibitor Kazal-type 2 (84 aa).

An N-terminal signal peptide occupies residues 1–23; sequence MALSVLRLALLLLAVTFAASLIP. Residue glutamine 24 is modified to Pyrrolidone carboxylic acid. The Kazal-like domain maps to 30 to 84; sequence KYRTPNCSQYRLPGCPRHFNPVCGSDMSTYANECTLCMKIREGGHNIKIIRNGPC. Disulfide bonds link cysteine 36–cysteine 66, cysteine 44–cysteine 63, and cysteine 52–cysteine 84.

As to expression, expressed in epididymis (at protein level).

It is found in the secreted. The protein localises to the cytoplasmic vesicle. It localises to the secretory vesicle. Its subcellular location is the acrosome. Functionally, as a strong inhibitor of acrosin, it is required for normal spermiogenesis. It probably hinders premature activation of proacrosin and other proteases, thus preventing the cascade of events leading to spermiogenesis defects. May be involved in the regulation of serine protease-dependent germ cell apoptosis. It also inhibits trypsin. The chain is Serine protease inhibitor Kazal-type 2 (SPINK2) from Homo sapiens (Human).